Reading from the N-terminus, the 263-residue chain is 3-deoxy-manno-octulosonate cytidylyltransferase (263 aa).

Belongs to the KdsB family.

The protein localises to the cytoplasm. It carries out the reaction 3-deoxy-alpha-D-manno-oct-2-ulosonate + CTP = CMP-3-deoxy-beta-D-manno-octulosonate + diphosphate. It functions in the pathway nucleotide-sugar biosynthesis; CMP-3-deoxy-D-manno-octulosonate biosynthesis; CMP-3-deoxy-D-manno-octulosonate from 3-deoxy-D-manno-octulosonate and CTP: step 1/1. It participates in bacterial outer membrane biogenesis; lipopolysaccharide biosynthesis. Functionally, activates KDO (a required 8-carbon sugar) for incorporation into bacterial lipopolysaccharide in Gram-negative bacteria. This chain is 3-deoxy-manno-octulosonate cytidylyltransferase, found in Burkholderia vietnamiensis (strain G4 / LMG 22486) (Burkholderia cepacia (strain R1808)).